A 109-amino-acid polypeptide reads, in one-letter code: Nucleoid-associated protein LBUL_1514 (109 aa).

This sequence belongs to the YbaB/EbfC family. In terms of assembly, homodimer.

The protein resides in the cytoplasm. Its subcellular location is the nucleoid. Binds to DNA and alters its conformation. May be involved in regulation of gene expression, nucleoid organization and DNA protection. This is Nucleoid-associated protein LBUL_1514 from Lactobacillus delbrueckii subsp. bulgaricus (strain ATCC BAA-365 / Lb-18).